Here is a 485-residue protein sequence, read N- to C-terminus: Glutamyl-tRNA(Gln) amidotransferase subunit A (485 aa).

Catalysis depends on charge relay system residues Lys-82 and Ser-157. Ser-181 functions as the Acyl-ester intermediate in the catalytic mechanism.

Belongs to the amidase family. GatA subfamily. Heterotrimer of A, B and C subunits.

It carries out the reaction L-glutamyl-tRNA(Gln) + L-glutamine + ATP + H2O = L-glutaminyl-tRNA(Gln) + L-glutamate + ADP + phosphate + H(+). In terms of biological role, allows the formation of correctly charged Gln-tRNA(Gln) through the transamidation of misacylated Glu-tRNA(Gln) in organisms which lack glutaminyl-tRNA synthetase. The reaction takes place in the presence of glutamine and ATP through an activated gamma-phospho-Glu-tRNA(Gln). The chain is Glutamyl-tRNA(Gln) amidotransferase subunit A from Treponema denticola (strain ATCC 35405 / DSM 14222 / CIP 103919 / JCM 8153 / KCTC 15104).